A 198-amino-acid chain; its full sequence is Potassium-transporting ATPase KdpC subunit (198 aa).

A helical membrane pass occupies residues 8–28 (ILAVLVFTILCGIIYPVSTTV).

The protein belongs to the KdpC family. In terms of assembly, the system is composed of three essential subunits: KdpA, KdpB and KdpC.

It is found in the cell membrane. In terms of biological role, part of the high-affinity ATP-driven potassium transport (or Kdp) system, which catalyzes the hydrolysis of ATP coupled with the electrogenic transport of potassium into the cytoplasm. This subunit acts as a catalytic chaperone that increases the ATP-binding affinity of the ATP-hydrolyzing subunit KdpB by the formation of a transient KdpB/KdpC/ATP ternary complex. This is Potassium-transporting ATPase KdpC subunit from Clostridium perfringens (strain ATCC 13124 / DSM 756 / JCM 1290 / NCIMB 6125 / NCTC 8237 / Type A).